A 484-amino-acid polypeptide reads, in one-letter code: Ribosomal RNA small subunit methyltransferase F (484 aa).

S-adenosyl-L-methionine-binding positions include 119–125, Glu143, Asp170, and Asp188; that span reads ASAPGSK. Residue Cys241 is the Nucleophile of the active site.

The protein belongs to the class I-like SAM-binding methyltransferase superfamily. RsmB/NOP family.

The protein localises to the cytoplasm. It carries out the reaction cytidine(1407) in 16S rRNA + S-adenosyl-L-methionine = 5-methylcytidine(1407) in 16S rRNA + S-adenosyl-L-homocysteine + H(+). Specifically methylates the cytosine at position 1407 (m5C1407) of 16S rRNA. The chain is Ribosomal RNA small subunit methyltransferase F from Shewanella frigidimarina (strain NCIMB 400).